Consider the following 418-residue polypeptide: Putative ion-transport protein YfeO (418 aa).

12 consecutive transmembrane segments (helical) span residues 10 to 30 (LLLS…LIMV), 54 to 74 (DSPL…GLVI), 99 to 119 (ALPG…SLGP), 120 to 140 (EHPI…RLLP), 149 to 169 (ILAS…AALI), 186 to 206 (LFAP…FFHP), 223 to 243 (ILSG…AVWC), 258 to 278 (VFVL…GGPV), 300 to 320 (DYFL…ASGF), 322 to 342 (GGRI…LHEH), 343 to 363 (VPAV…VLVV), and 371 to 391 (LFMA…CIVM).

It belongs to the chloride channel (TC 2.A.49) family.

The protein localises to the cell membrane. This Escherichia coli O45:K1 (strain S88 / ExPEC) protein is Putative ion-transport protein YfeO.